The sequence spans 638 residues: ATP-dependent zinc metalloprotease FtsH (638 aa).

At 1 to 7 (MRSTYKT) the chain is on the cytoplasmic side. The chain crosses the membrane as a helical span at residues 8–28 (IGLWVILIVLFVAFYNFFSQG). Residues 29–102 (NDQVQEPSFT…KYEREEQNSL (74 aa)) are Periplasmic-facing. A helical membrane pass occupies residues 103–123 (WLTILGQWMPVVFLFLFFIFF). Residues 124–638 (MRQLQGGSGK…GLPAMEPKKA (515 aa)) lie on the Cytoplasmic side of the membrane. Position 195-202 (195-202 (GSPGTGKT)) interacts with ATP. Zn(2+) is bound at residue H417. The active site involves E418. Zn(2+) contacts are provided by H421 and D493. The disordered stretch occupies residues 596–638 (GGQLTRERPPPRVNAPPKATEKKDKRKILDALEGLPAMEPKKA). The span at 614-625 (ATEKKDKRKILD) shows a compositional bias: basic and acidic residues.

It in the central section; belongs to the AAA ATPase family. In the C-terminal section; belongs to the peptidase M41 family. Homohexamer. Zn(2+) is required as a cofactor.

It is found in the cell inner membrane. Its function is as follows. Acts as a processive, ATP-dependent zinc metallopeptidase for both cytoplasmic and membrane proteins. Plays a role in the quality control of integral membrane proteins. The sequence is that of ATP-dependent zinc metalloprotease FtsH from Myxococcus xanthus (strain DK1622).